Here is a 153-residue protein sequence, read N- to C-terminus: Transcriptional repressor NrdR (153 aa).

A zinc finger spans residues Cys3–Cys34. In terms of domain architecture, ATP-cone spans Ile49–Thr139.

It belongs to the NrdR family. The cofactor is Zn(2+).

Its function is as follows. Negatively regulates transcription of bacterial ribonucleotide reductase nrd genes and operons by binding to NrdR-boxes. This Caldicellulosiruptor saccharolyticus (strain ATCC 43494 / DSM 8903 / Tp8T 6331) protein is Transcriptional repressor NrdR.